Reading from the N-terminus, the 186-residue chain is C-type lectin 37Da (186 aa).

The signal sequence occupies residues 1–20 (MLKTLVQLFLVVAGFAPGFG). Residues asparagine 35 and asparagine 47 are each glycosylated (N-linked (GlcNAc...) asparagine). The C-type lectin domain occupies 46–169 (INESYYVFGQ…CHNHASSLFK (124 aa)). A disulfide bond links cysteine 140 and cysteine 160.

It localises to the secreted. In terms of biological role, galactose-specific lectin that displays calcium-dependent activity. Binds to the surface of hemocytes and enhances hemocyte encapsulation and melanization. This is likely by interacting with carbohydrates on the surface of the hemocytes. Also displays agglutination activity against the Gram-negative bacterium E.coli. The sequence is that of C-type lectin 37Da from Drosophila melanogaster (Fruit fly).